A 688-amino-acid chain; its full sequence is Glycine--tRNA ligase beta subunit (688 aa).

Belongs to the class-II aminoacyl-tRNA synthetase family. Tetramer of two alpha and two beta subunits.

It localises to the cytoplasm. The enzyme catalyses tRNA(Gly) + glycine + ATP = glycyl-tRNA(Gly) + AMP + diphosphate. This is Glycine--tRNA ligase beta subunit from Listeria monocytogenes serotype 4a (strain HCC23).